Consider the following 265-residue polypeptide: Catechol O-methyltransferase (265 aa).

Residues 1-2 (ML) lie on the Cytoplasmic side of the membrane. Residues 3–19 (LAAVSLGLLLLAFLLLL) form a helical; Signal-anchor for type II membrane protein membrane-spanning segment. Topologically, residues 20–265 (RHLGWGLVAI…QGPGSSPVKS (246 aa)) are extracellular. Residues valine 85, glutamate 107, serine 115, glutamate 133, isoleucine 134, 160 to 163 (GASQ), serine 162, and aspartate 184 each bind S-adenosyl-L-methionine. Aspartate 184 is a Mg(2+) binding site. Lysine 187 provides a ligand contact to substrate. Residues aspartate 212 and asparagine 213 each contribute to the Mg(2+) site. Residues asparagine 213 and glutamate 242 each contribute to the substrate site. Phosphoserine is present on residues serine 260, serine 261, and serine 265.

It belongs to the class I-like SAM-binding methyltransferase superfamily. Cation-dependent O-methyltransferase family. The cofactor is Mg(2+).

It localises to the cytoplasm. It is found in the cell membrane. It carries out the reaction a catechol + S-adenosyl-L-methionine = a guaiacol + S-adenosyl-L-homocysteine + H(+). The enzyme catalyses 2-hydroxyestrone + S-adenosyl-L-methionine = 2-hydroxy-3-methoxy-estrone + S-adenosyl-L-homocysteine + H(+). The catalysed reaction is 4-hydroxyestrone + S-adenosyl-L-methionine = 4-methoxyestrone + S-adenosyl-L-homocysteine + H(+). It catalyses the reaction 2-hydroxyestrone + S-adenosyl-L-methionine = 2-methoxyestrone + S-adenosyl-L-homocysteine + H(+). It carries out the reaction 4-hydroxy-17beta-estradiol + S-adenosyl-L-methionine = 4-methoxy-17beta-estradiol + S-adenosyl-L-homocysteine + H(+). The enzyme catalyses 2-hydroxy-17beta-estradiol + S-adenosyl-L-methionine = 2-hydroxy-3-methoxy-17beta-estradiol + S-adenosyl-L-homocysteine + H(+). The catalysed reaction is 2-hydroxy-17beta-estradiol + S-adenosyl-L-methionine = 2-methoxy-17beta-estradiol + S-adenosyl-L-homocysteine + H(+). Functionally, catalyzes the O-methylation, and thereby the inactivation, of catecholamine neurotransmitters and catechol hormones. Also shortens the biological half-lives of certain neuroactive drugs, like L-DOPA, alpha-methyl DOPA and isoproterenol. This chain is Catechol O-methyltransferase, found in Mus musculus (Mouse).